Reading from the N-terminus, the 428-residue chain is 2,3-bisphosphoglycerate-independent phosphoglycerate mutase 2 (428 aa).

This sequence belongs to the BPG-independent phosphoglycerate mutase family. A-PGAM subfamily.

The enzyme catalyses (2R)-2-phosphoglycerate = (2R)-3-phosphoglycerate. It functions in the pathway carbohydrate degradation; glycolysis; pyruvate from D-glyceraldehyde 3-phosphate: step 3/5. Functionally, catalyzes the interconversion of 2-phosphoglycerate and 3-phosphoglycerate. This chain is 2,3-bisphosphoglycerate-independent phosphoglycerate mutase 2 (apgM2), found in Methanocaldococcus jannaschii (strain ATCC 43067 / DSM 2661 / JAL-1 / JCM 10045 / NBRC 100440) (Methanococcus jannaschii).